A 105-amino-acid chain; its full sequence is Nucleoid-associated protein lin2851 (105 aa).

Positions 1-16 are enriched in low complexity; that stretch reads MRGMGNMQGMMKQMQK. Positions 1 to 23 are disordered; that stretch reads MRGMGNMQGMMKQMQKMQKEMAK.

Belongs to the YbaB/EbfC family. As to quaternary structure, homodimer.

Its subcellular location is the cytoplasm. It is found in the nucleoid. In terms of biological role, binds to DNA and alters its conformation. May be involved in regulation of gene expression, nucleoid organization and DNA protection. This Listeria innocua serovar 6a (strain ATCC BAA-680 / CLIP 11262) protein is Nucleoid-associated protein lin2851.